Here is a 202-residue protein sequence, read N- to C-terminus: Probable cytochrome c oxidase subunit 3 (202 aa).

5 consecutive transmembrane segments (helical) span residues 30–50 (VVWL…YFTA), 69–89 (AVPV…GVFS), 101–121 (WYVI…YEYY), 141–161 (LATG…IFLL), and 178–198 (IVVS…FTVI).

Belongs to the cytochrome c oxidase subunit 3 family.

It is found in the cell membrane. The catalysed reaction is 4 Fe(II)-[cytochrome c] + O2 + 8 H(+)(in) = 4 Fe(III)-[cytochrome c] + 2 H2O + 4 H(+)(out). This chain is Probable cytochrome c oxidase subunit 3 (ctaE), found in Mycobacterium leprae (strain TN).